Reading from the N-terminus, the 509-residue chain is Phosphoenolpyruvate carboxylase (509 aa).

This sequence belongs to the PEPCase type 2 family. Homotetramer. Requires Mg(2+) as cofactor.

It catalyses the reaction oxaloacetate + phosphate = phosphoenolpyruvate + hydrogencarbonate. In terms of biological role, catalyzes the irreversible beta-carboxylation of phosphoenolpyruvate (PEP) to form oxaloacetate (OAA), a four-carbon dicarboxylic acid source for the tricarboxylic acid cycle. The chain is Phosphoenolpyruvate carboxylase from Metallosphaera sedula (strain ATCC 51363 / DSM 5348 / JCM 9185 / NBRC 15509 / TH2).